A 155-amino-acid chain; its full sequence is Eosinophil cationic protein (155 aa).

The signal sequence occupies residues Met1–Cys25. His38 serves as the catalytic Proton acceptor. 4 cysteine pairs are disulfide-bonded: Cys47–Cys106, Cys61–Cys118, Cys79–Cys133, and Cys86–Cys94. Residue Lys62–Thr66 participates in substrate binding. 2 N-linked (GlcNAc...) asparagine glycosylation sites follow: Asn88 and Asn107. Catalysis depends on His150, which acts as the Proton donor.

It belongs to the pancreatic ribonuclease family.

The protein resides in the cytoplasmic granule. In terms of biological role, cytotoxin and helminthotoxin with ribonuclease activity. Possesses a wide variety of biological activities. The sequence is that of Eosinophil cationic protein (Rnase3) from Rattus norvegicus (Rat).